Consider the following 259-residue polypeptide: TCF3 fusion partner homolog (259 aa).

Disordered stretches follow at residues 50-72 (GGLG…GRRR) and 141-210 (EDDG…APVQ). Ser-167 carries the post-translational modification Phosphoserine. Residues 167-178 (SPSQRTTATLDP) show a composition bias toward polar residues. Thr-172 carries the phosphothreonine modification. Phosphoserine occurs at positions 180 and 188. Thr-203 is subject to Phosphothreonine. Residue Lys-222 forms a Glycyl lysine isopeptide (Lys-Gly) (interchain with G-Cter in SUMO2) linkage. Ser-255 is subject to Phosphoserine.

As to quaternary structure, interacts with NOL3; translocates NOL3 into the nucleus and negatively regulated TFPT-induced cell death. Component of the chromatin remodeling INO80 complex; specifically part of a complex module associated with the N-terminus of INO80.

Its subcellular location is the nucleus. Appears to promote apoptosis in a p53/TP53-independent manner. In terms of biological role, putative regulatory component of the chromatin remodeling INO80 complex which is involved in transcriptional regulation, DNA replication and probably DNA repair. The sequence is that of TCF3 fusion partner homolog (Tfpt) from Mus musculus (Mouse).